We begin with the raw amino-acid sequence, 130 residues long: Small ribosomal subunit protein uS9 (130 aa).

It belongs to the universal ribosomal protein uS9 family.

This is Small ribosomal subunit protein uS9 (rpsI) from Geobacillus stearothermophilus (Bacillus stearothermophilus).